Here is a 146-residue protein sequence, read N- to C-terminus: Globin-1 (146 aa).

One can recognise a Globin domain in the interval 9-146 (QLTADVKKDL…KLVAVVQAAL (138 aa)). Residue His101 coordinates heme b.

This sequence belongs to the globin family. Homodimer.

Its subcellular location is the cytoplasm. The sequence is that of Globin-1 from Anadara inaequivalvis (Inequivalve ark).